Here is a 279-residue protein sequence, read N- to C-terminus: Glutamate racemase (279 aa).

Substrate is bound by residues aspartate 13–serine 14 and tyrosine 45–glycine 46. Residue cysteine 76 is the Proton donor/acceptor of the active site. Asparagine 77 to threonine 78 serves as a coordination point for substrate. Cysteine 185 acts as the Proton donor/acceptor in catalysis. Threonine 186–histidine 187 lines the substrate pocket.

Belongs to the aspartate/glutamate racemases family.

It catalyses the reaction L-glutamate = D-glutamate. The protein operates within cell wall biogenesis; peptidoglycan biosynthesis. Its function is as follows. Provides the (R)-glutamate required for cell wall biosynthesis. The protein is Glutamate racemase of Picosynechococcus sp. (strain ATCC 27264 / PCC 7002 / PR-6) (Agmenellum quadruplicatum).